The chain runs to 320 residues: Ferrochelatase (320 aa).

2 residues coordinate Fe cation: H194 and E275.

This sequence belongs to the ferrochelatase family.

Its subcellular location is the cytoplasm. The catalysed reaction is heme b + 2 H(+) = protoporphyrin IX + Fe(2+). It participates in porphyrin-containing compound metabolism; protoheme biosynthesis; protoheme from protoporphyrin-IX: step 1/1. In terms of biological role, catalyzes the ferrous insertion into protoporphyrin IX. The chain is Ferrochelatase from Cronobacter sakazakii (strain ATCC BAA-894) (Enterobacter sakazakii).